Consider the following 386-residue polypeptide: Succinate--CoA ligase [ADP-forming] subunit beta (386 aa).

An ATP-grasp domain is found at 9–244 (KEILRKYGVP…HDEEDPLETR (236 aa)). ATP contacts are provided by residues lysine 46, 53-55 (GRG), glutamate 99, cysteine 102, and glutamate 107. Positions 199 and 213 each coordinate Mg(2+). Substrate-binding positions include asparagine 264 and 321–323 (GIM).

This sequence belongs to the succinate/malate CoA ligase beta subunit family. As to quaternary structure, heterotetramer of two alpha and two beta subunits. It depends on Mg(2+) as a cofactor.

The catalysed reaction is succinate + ATP + CoA = succinyl-CoA + ADP + phosphate. The enzyme catalyses GTP + succinate + CoA = succinyl-CoA + GDP + phosphate. It functions in the pathway carbohydrate metabolism; tricarboxylic acid cycle; succinate from succinyl-CoA (ligase route): step 1/1. In terms of biological role, succinyl-CoA synthetase functions in the citric acid cycle (TCA), coupling the hydrolysis of succinyl-CoA to the synthesis of either ATP or GTP and thus represents the only step of substrate-level phosphorylation in the TCA. The beta subunit provides nucleotide specificity of the enzyme and binds the substrate succinate, while the binding sites for coenzyme A and phosphate are found in the alpha subunit. This chain is Succinate--CoA ligase [ADP-forming] subunit beta, found in Rickettsia rickettsii (strain Iowa).